Reading from the N-terminus, the 355-residue chain is Phospho-N-acetylmuramoyl-pentapeptide-transferase (355 aa).

A run of 10 helical transmembrane segments spans residues Pro-14–Phe-34, Leu-40–Pro-60, Gly-84–Trp-104, Phe-107–Leu-127, Leu-147–Ser-167, Leu-176–Ser-196, Val-205–Ala-225, Ser-227–Phe-247, Ala-268–Phe-290, and Thr-334–Ser-354.

Belongs to the glycosyltransferase 4 family. MraY subfamily. It depends on Mg(2+) as a cofactor.

Its subcellular location is the cell inner membrane. It catalyses the reaction UDP-N-acetyl-alpha-D-muramoyl-L-alanyl-gamma-D-glutamyl-meso-2,6-diaminopimeloyl-D-alanyl-D-alanine + di-trans,octa-cis-undecaprenyl phosphate = di-trans,octa-cis-undecaprenyl diphospho-N-acetyl-alpha-D-muramoyl-L-alanyl-D-glutamyl-meso-2,6-diaminopimeloyl-D-alanyl-D-alanine + UMP. It functions in the pathway cell wall biogenesis; peptidoglycan biosynthesis. Its function is as follows. Catalyzes the initial step of the lipid cycle reactions in the biosynthesis of the cell wall peptidoglycan: transfers peptidoglycan precursor phospho-MurNAc-pentapeptide from UDP-MurNAc-pentapeptide onto the lipid carrier undecaprenyl phosphate, yielding undecaprenyl-pyrophosphoryl-MurNAc-pentapeptide, known as lipid I. In Microcystis aeruginosa (strain NIES-843 / IAM M-2473), this protein is Phospho-N-acetylmuramoyl-pentapeptide-transferase.